The primary structure comprises 145 residues: uncharacterized protein (145 aa).

The first 20 residues, 1–20 (MPSKVCTLILLFSVINQMKC), serve as a signal peptide directing secretion.

This is an uncharacterized protein from Caenorhabditis elegans.